The chain runs to 206 residues: Large ribosomal subunit protein uL4 (206 aa).

It belongs to the universal ribosomal protein uL4 family. As to quaternary structure, part of the 50S ribosomal subunit.

In terms of biological role, one of the primary rRNA binding proteins, this protein initially binds near the 5'-end of the 23S rRNA. It is important during the early stages of 50S assembly. It makes multiple contacts with different domains of the 23S rRNA in the assembled 50S subunit and ribosome. Functionally, forms part of the polypeptide exit tunnel. The chain is Large ribosomal subunit protein uL4 from Methylorubrum extorquens (strain CM4 / NCIMB 13688) (Methylobacterium extorquens).